The primary structure comprises 499 residues: Sensor histidine kinase VxrA (499 aa).

Over 1 to 12 (MRYSFCMLEKTN) the chain is Cytoplasmic. Residues 13–31 (IPLIRALNLTLVSLCFAML) form a helical membrane-spanning segment. Residues 32 to 257 (PNPVHADSLP…ICWDVEDHSD (226 aa)) are Periplasmic-facing. 2 disulfides stabilise this stretch: Cys101/Cys122 and Cys241/Cys249. The chain crosses the membrane as a helical span at residues 258-280 (LLRTSMIILVIANIFLVLGWSGY). Residues 281–499 (RWNSKRQEMR…IPCETDTASR (219 aa)) are Cytoplasmic-facing. Positions 298–494 (ILTHELRTPI…TFILEIPCET (197 aa)) constitute a Histidine kinase domain. His301 bears the Phosphohistidine; by autocatalysis mark.

As to quaternary structure, homodimer. Autophosphorylated. Contains two disulfide bonds that may play a role in the stability of the protein. However, the disulfide bonds are not absolutely essential, as some activity and growth are detected in the absence of each disulfide bond.

It is found in the cell inner membrane. It carries out the reaction ATP + protein L-histidine = ADP + protein N-phospho-L-histidine.. Member of the two-component regulatory system VxrB/VxrA involved in the regulation of diverses processes, including virulence, the type VI secretion system (T6SS) and biofilm formation. Functions as a sensor protein kinase which is autophosphorylated at a histidine residue and transfers its phosphate group to the conserved aspartic acid residue in the regulatory domain of VxrB. Is critical for colonization in the infant mouse model. Contributes to the resistance to beta-lactam treatment. The chain is Sensor histidine kinase VxrA from Vibrio cholerae serotype O1 (strain ATCC 39315 / El Tor Inaba N16961).